A 185-amino-acid polypeptide reads, in one-letter code: ATP synthase subunit b, chloroplastic (185 aa).

A helical membrane pass occupies residues L31–L49.

It belongs to the ATPase B chain family. F-type ATPases have 2 components, F(1) - the catalytic core - and F(0) - the membrane proton channel. F(1) has five subunits: alpha(3), beta(3), gamma(1), delta(1), epsilon(1). F(0) has four main subunits: a(1), b(1), b'(1) and c(10-14). The alpha and beta chains form an alternating ring which encloses part of the gamma chain. F(1) is attached to F(0) by a central stalk formed by the gamma and epsilon chains, while a peripheral stalk is formed by the delta, b and b' chains.

It is found in the plastid. The protein resides in the chloroplast thylakoid membrane. Its function is as follows. F(1)F(0) ATP synthase produces ATP from ADP in the presence of a proton or sodium gradient. F-type ATPases consist of two structural domains, F(1) containing the extramembraneous catalytic core and F(0) containing the membrane proton channel, linked together by a central stalk and a peripheral stalk. During catalysis, ATP synthesis in the catalytic domain of F(1) is coupled via a rotary mechanism of the central stalk subunits to proton translocation. In terms of biological role, component of the F(0) channel, it forms part of the peripheral stalk, linking F(1) to F(0). In Huperzia lucidula (Shining clubmoss), this protein is ATP synthase subunit b, chloroplastic.